A 141-amino-acid chain; its full sequence is Large ribosomal subunit protein uL16c (141 aa).

Belongs to the universal ribosomal protein uL16 family. In terms of assembly, part of the 50S ribosomal subunit.

It localises to the plastid. It is found in the chloroplast. The chain is Large ribosomal subunit protein uL16c from Zygnema circumcarinatum (Green alga).